The primary structure comprises 163 residues: Nucleotide-binding protein APL_1231 (163 aa).

This sequence belongs to the YajQ family.

Functionally, nucleotide-binding protein. This is Nucleotide-binding protein APL_1231 from Actinobacillus pleuropneumoniae serotype 5b (strain L20).